A 115-amino-acid chain; its full sequence is NAD(P)H-quinone oxidoreductase subunit M (115 aa).

Belongs to the complex I NdhM subunit family. NDH-1 can be composed of about 15 different subunits; different subcomplexes with different compositions have been identified which probably have different functions.

It is found in the cellular thylakoid membrane. The enzyme catalyses a plastoquinone + NADH + (n+1) H(+)(in) = a plastoquinol + NAD(+) + n H(+)(out). It catalyses the reaction a plastoquinone + NADPH + (n+1) H(+)(in) = a plastoquinol + NADP(+) + n H(+)(out). Functionally, NDH-1 shuttles electrons from an unknown electron donor, via FMN and iron-sulfur (Fe-S) centers, to quinones in the respiratory and/or the photosynthetic chain. The immediate electron acceptor for the enzyme in this species is believed to be plastoquinone. Couples the redox reaction to proton translocation, and thus conserves the redox energy in a proton gradient. Cyanobacterial NDH-1 also plays a role in inorganic carbon-concentration. The protein is NAD(P)H-quinone oxidoreductase subunit M of Trichodesmium erythraeum (strain IMS101).